Reading from the N-terminus, the 88-residue chain is Small ribosomal subunit protein uS15 (88 aa).

The span at 1 to 20 (MLATEKKQELIDQYKRHEGD) shows a compositional bias: basic and acidic residues. Residues 1–21 (MLATEKKQELIDQYKRHEGDT) form a disordered region.

It belongs to the universal ribosomal protein uS15 family. Part of the 30S ribosomal subunit. Forms a bridge to the 50S subunit in the 70S ribosome, contacting the 23S rRNA.

Its function is as follows. One of the primary rRNA binding proteins, it binds directly to 16S rRNA where it helps nucleate assembly of the platform of the 30S subunit by binding and bridging several RNA helices of the 16S rRNA. Functionally, forms an intersubunit bridge (bridge B4) with the 23S rRNA of the 50S subunit in the ribosome. The polypeptide is Small ribosomal subunit protein uS15 (Syntrophotalea carbinolica (strain DSM 2380 / NBRC 103641 / GraBd1) (Pelobacter carbinolicus)).